The following is a 152-amino-acid chain: Transcription elongation factor Spt5 (152 aa).

The KOW domain maps to 98 to 127 (EGDLVEVVSGPFRGMQAQVVKVTEGKGEVV).

This sequence belongs to the archaeal Spt5 family. Heterodimer composed of Spt4 and Spt5. Interacts with RNA polymerase (RNAP).

Functionally, stimulates transcription elongation. The sequence is that of Transcription elongation factor Spt5 from Acidianus ambivalens (Desulfurolobus ambivalens).